Reading from the N-terminus, the 228-residue chain is RNA chaperone ProQ (228 aa).

A disordered region spans residues 107–178 (KARVQAQRAE…REEKHTPVSD (72 aa)). 2 stretches are compositionally biased toward basic and acidic residues: residues 117–136 (QQAK…DAPR) and 146–175 (RRKE…KHTP).

It belongs to the ProQ family.

Its subcellular location is the cytoplasm. RNA chaperone with significant RNA binding, RNA strand exchange and RNA duplexing activities. May regulate ProP activity through an RNA-based, post-transcriptional mechanism. This chain is RNA chaperone ProQ, found in Salmonella agona (strain SL483).